Consider the following 272-residue polypeptide: Phosphoribosylformylglycinamidine synthase subunit PurQ (272 aa).

The Glutamine amidotransferase type-1 domain maps to 8–272 (VLVMSGYGIN…FKNAVEYFNK (265 aa)). The active-site Nucleophile is Cys98. Residues His225, Glu227, and Glu235 contribute to the active site.

Part of the FGAM synthase complex composed of 1 PurL, 1 PurQ and 2 PurS subunits.

The protein resides in the cytoplasm. The enzyme catalyses N(2)-formyl-N(1)-(5-phospho-beta-D-ribosyl)glycinamide + L-glutamine + ATP + H2O = 2-formamido-N(1)-(5-O-phospho-beta-D-ribosyl)acetamidine + L-glutamate + ADP + phosphate + H(+). It catalyses the reaction L-glutamine + H2O = L-glutamate + NH4(+). The protein operates within purine metabolism; IMP biosynthesis via de novo pathway; 5-amino-1-(5-phospho-D-ribosyl)imidazole from N(2)-formyl-N(1)-(5-phospho-D-ribosyl)glycinamide: step 1/2. Functionally, part of the phosphoribosylformylglycinamidine synthase complex involved in the purines biosynthetic pathway. Catalyzes the ATP-dependent conversion of formylglycinamide ribonucleotide (FGAR) and glutamine to yield formylglycinamidine ribonucleotide (FGAM) and glutamate. The FGAM synthase complex is composed of three subunits. PurQ produces an ammonia molecule by converting glutamine to glutamate. PurL transfers the ammonia molecule to FGAR to form FGAM in an ATP-dependent manner. PurS interacts with PurQ and PurL and is thought to assist in the transfer of the ammonia molecule from PurQ to PurL. This Methanococcus maripaludis (strain DSM 14266 / JCM 13030 / NBRC 101832 / S2 / LL) protein is Phosphoribosylformylglycinamidine synthase subunit PurQ.